We begin with the raw amino-acid sequence, 413 residues long: Serine hydroxymethyltransferase (413 aa).

(6S)-5,6,7,8-tetrahydrofolate contacts are provided by residues L119 and 123-125 (GHL). An N6-(pyridoxal phosphate)lysine modification is found at K228.

This sequence belongs to the SHMT family. Homodimer. The cofactor is pyridoxal 5'-phosphate.

The protein resides in the cytoplasm. The catalysed reaction is (6R)-5,10-methylene-5,6,7,8-tetrahydrofolate + glycine + H2O = (6S)-5,6,7,8-tetrahydrofolate + L-serine. The protein operates within one-carbon metabolism; tetrahydrofolate interconversion. It functions in the pathway amino-acid biosynthesis; glycine biosynthesis; glycine from L-serine: step 1/1. Functionally, catalyzes the reversible interconversion of serine and glycine with tetrahydrofolate (THF) serving as the one-carbon carrier. This reaction serves as the major source of one-carbon groups required for the biosynthesis of purines, thymidylate, methionine, and other important biomolecules. Also exhibits THF-independent aldolase activity toward beta-hydroxyamino acids, producing glycine and aldehydes, via a retro-aldol mechanism. This Caldanaerobacter subterraneus subsp. tengcongensis (strain DSM 15242 / JCM 11007 / NBRC 100824 / MB4) (Thermoanaerobacter tengcongensis) protein is Serine hydroxymethyltransferase.